Reading from the N-terminus, the 391-residue chain is Capsule polysaccharide export outer membrane protein CtrA (391 aa).

An N-terminal signal peptide occupies residues 1-22 (MFKVKFYIRHAVLLLCGSLIVG). Cysteine 23 carries the N-palmitoyl cysteine lipid modification. Residue cysteine 23 is the site of S-diacylglycerol cysteine attachment. Topologically, residues 23–33 (CSAIPSSGPSA) are periplasmic. A beta stranded transmembrane segment spans residues 34–43 (KKIVSLGQQS). Residues 44–57 (EVQIPEVELIDVNH) lie on the Extracellular side of the membrane. The chain crosses the membrane as a beta stranded span at residues 58–67 (TVAQLLYKAQ). The Periplasmic segment spans residues 68–83 (INQSFTQFGDGYASAG). A beta stranded transmembrane segment spans residues 84–93 (TLNIGDVLDI). Topologically, residues 94–117 (MIWEAPPAVLFGGGLSSMGSGSAH) are extracellular. A beta stranded membrane pass occupies residues 118–127 (QTKLPEQLVT). Over 128–135 (ARGTVSVP) the chain is Periplasmic. The beta stranded transmembrane segment at 136-145 (FVGDISVVGK) threads the bilayer. The Extracellular segment spans residues 146-148 (TPG). A beta stranded membrane pass occupies residues 149 to 158 (QVQEIIKGRL). Over 159-161 (KKM) the chain is Periplasmic. The beta stranded transmembrane segment at 162–171 (ANQPQVMVRL) threads the bilayer. Residues 172-178 (VQNNAAN) lie on the Extracellular side of the membrane. The beta stranded transmembrane segment at 179–188 (VSVIRAGNSV) threads the bilayer. The Periplasmic portion of the chain corresponds to 189 to 391 (RMPLTAAGER…GANSINNLTN (203 aa)).

This sequence belongs to the BexD/CtrA/VexA family.

It localises to the cell outer membrane. Involved in transport of capsular polysaccharides to the cell surface. May function as a membrane anchor for capsular polysaccharides. Possible porin properties. In Neisseria meningitidis serogroup B (strain ATCC BAA-335 / MC58), this protein is Capsule polysaccharide export outer membrane protein CtrA (ctrA).